The chain runs to 234 residues: Glutathione S-transferase U16 (234 aa).

Positions 5–85 (EEVKLLGVWY…YIDETWNSSA (81 aa)) constitute a GST N-terminal domain. Residues 15 to 16 (SP), 42 to 43 (SK), 56 to 57 (KV), and 69 to 70 (ES) each bind glutathione. The region spanning 92–219 (HPYDRALARF…APEIEKVAEF (128 aa)) is the GST C-terminal domain.

Belongs to the GST superfamily. Tau family.

It localises to the cytoplasm. Its subcellular location is the cytosol. The catalysed reaction is RX + glutathione = an S-substituted glutathione + a halide anion + H(+). In terms of biological role, may be involved in the conjugation of reduced glutathione to a wide number of exogenous and endogenous hydrophobic electrophiles and have a detoxification role against certain herbicides. The sequence is that of Glutathione S-transferase U16 (GSTU16) from Arabidopsis thaliana (Mouse-ear cress).